Consider the following 345-residue polypeptide: NADH-quinone oxidoreductase subunit H (345 aa).

The next 8 membrane-spanning stretches (helical) occupy residues 9-29 (ALGA…LVFA), 82-102 (VVMV…EGVV), 108-128 (VGVI…TLAG), 154-174 (MGLA…MEIV), 183-203 (LLGW…VTAF), 241-261 (YVNW…GYLV), 282-302 (LLQF…FIWV), and 325-345 (IALA…AVGL).

The protein belongs to the complex I subunit 1 family. In terms of assembly, NDH-1 is composed of 14 different subunits. Subunits NuoA, H, J, K, L, M, N constitute the membrane sector of the complex.

It is found in the cell inner membrane. The enzyme catalyses a quinone + NADH + 5 H(+)(in) = a quinol + NAD(+) + 4 H(+)(out). NDH-1 shuttles electrons from NADH, via FMN and iron-sulfur (Fe-S) centers, to quinones in the respiratory chain. The immediate electron acceptor for the enzyme in this species is believed to be ubiquinone. Couples the redox reaction to proton translocation (for every two electrons transferred, four hydrogen ions are translocated across the cytoplasmic membrane), and thus conserves the redox energy in a proton gradient. This subunit may bind ubiquinone. In Salinibacter ruber (strain DSM 13855 / M31), this protein is NADH-quinone oxidoreductase subunit H.